A 570-amino-acid polypeptide reads, in one-letter code: Urease subunit alpha (570 aa).

Positions 131–570 (GGMDSHIHFI…LPMAQRYFLF (440 aa)) constitute a Urease domain. Residues histidine 136, histidine 138, and lysine 219 each contribute to the Ni(2+) site. Residue lysine 219 is modified to N6-carboxylysine. Histidine 221 is a binding site for substrate. Residues histidine 248 and histidine 274 each contribute to the Ni(2+) site. Residue histidine 322 is the Proton donor of the active site. Ni(2+) is bound at residue aspartate 362.

The protein belongs to the metallo-dependent hydrolases superfamily. Urease alpha subunit family. As to quaternary structure, heterotrimer of UreA (gamma), UreB (beta) and UreC (alpha) subunits. Three heterotrimers associate to form the active enzyme. The cofactor is Ni cation. In terms of processing, carboxylation allows a single lysine to coordinate two nickel ions.

It localises to the cytoplasm. The enzyme catalyses urea + 2 H2O + H(+) = hydrogencarbonate + 2 NH4(+). It participates in nitrogen metabolism; urea degradation; CO(2) and NH(3) from urea (urease route): step 1/1. This is Urease subunit alpha from Rhizobium johnstonii (strain DSM 114642 / LMG 32736 / 3841) (Rhizobium leguminosarum bv. viciae).